We begin with the raw amino-acid sequence, 917 residues long: DNA topoisomerase 1 beta (917 aa).

The disordered stretch occupies residues 1–368 (MATEAFVKPV…SLPSGDGQKK (368 aa)). Polar residues predominate over residues 32–63 (RNSNTAATTNRPSPINNAMRNSAIGSTKSSPP). A compositionally biased stretch (low complexity) spans 66 to 82 (SPLTSPNRSASSSTRSS). The span at 89–100 (PSSSSVQRSTLK) shows a compositional bias: polar residues. 2 stretches are compositionally biased toward basic and acidic residues: residues 102–116 (PLRD…ERNG) and 134–149 (DKPL…KEVT). The segment covering 150-170 (KQPSSSGRGSTQQAVQKSNMR) has biased composition (polar residues). The span at 177–187 (YTKKKVLDERA) shows a compositional bias: basic and acidic residues. The span at 189 to 205 (MSSTVQTKTSVGTSSSK) shows a compositional bias: polar residues. Basic and acidic residues-rich tracts occupy residues 256-265 (KLSEPARPVK) and 296-307 (VKEDNSDGDDHV). The residue at position 301 (S301) is a Phosphoserine. The span at 316 to 338 (DSSNNKSSSAKPSSSKMIASSSR) shows a compositional bias: low complexity. Interaction with DNA stretches follow at residues 575–576 (KY), 638–643 (RAGNEK), and 729–731 (TAK). The region spanning 582-912 (SSSLKGQSDK…MDVDPEFRFC (331 aa)) is the Topo IB-type catalytic domain. Residues 779 to 858 (VSKSHGAQVE…ERDMQTKEDM (80 aa)) are a coiled coil. The active-site O-(3'-phospho-DNA)-tyrosine intermediate is Y870.

It belongs to the type IB topoisomerase family.

Its subcellular location is the nucleus. The catalysed reaction is ATP-independent breakage of single-stranded DNA, followed by passage and rejoining.. In terms of biological role, releases the supercoiling and torsional tension of DNA introduced during the DNA replication and transcription by transiently cleaving and rejoining one strand of the DNA duplex. Introduces a single-strand break via transesterification at a target site in duplex DNA. The scissile phosphodiester is attacked by the catalytic tyrosine of the enzyme, resulting in the formation of a DNA-(3'-phosphotyrosyl)-enzyme intermediate and the expulsion of a 5'-OH DNA strand. The free DNA strand then rotates around the intact phosphodiester bond on the opposing strand, thus removing DNA supercoils. Finally, in the religation step, the DNA 5'-OH attacks the covalent intermediate to expel the active-site tyrosine and restore the DNA phosphodiester backbone. Topoisomerases 1 enzymes (TOP1A and TOP1B) are essential for plant survival. The sequence is that of DNA topoisomerase 1 beta from Arabidopsis thaliana (Mouse-ear cress).